Here is a 427-residue protein sequence, read N- to C-terminus: Terminal nucleotidyltransferase 5B (427 aa).

A compositionally biased stretch (acidic residues) spans 1-11; the sequence is MMPSESGDESL. The interval 1 to 46 is disordered; that stretch reads MMPSESGDESLEQPAAQVGTGAASAVATAGAAGGGPDLEASSASLG. Residues 15–30 are compositionally biased toward low complexity; the sequence is AAQVGTGAASAVATAG.

This sequence belongs to the TENT family.

It localises to the cytoplasm. Its subcellular location is the nucleus. The catalysed reaction is RNA(n) + ATP = RNA(n)-3'-adenine ribonucleotide + diphosphate. Catalyzes the transfer of one adenosine molecule from an ATP to an mRNA poly(A) tail bearing a 3'-OH terminal group in an ATP hydrolysis-dependent manner. May be involved in maintaining the translation efficiency of at least some genes through preventing degradation of their mRNAs. Prefers RNA molecules that are adenosine-rich close to 3'-end. In addition, may inhibit cell proliferation and cell cycle progression through ubiquitination of beta-catenin/CTNNB1. In Rattus norvegicus (Rat), this protein is Terminal nucleotidyltransferase 5B.